The chain runs to 188 residues: Viral FLICE protein (188 aa).

2 DED domains span residues 2-74 (ATYE…DLLH) and 93-169 (PYQL…QVQT).

In terms of assembly, interacts with host RIPK1, TRAF2, MAP3K14, IKBKB, and IKBKG. Interacts with host CADM1; this interaction is essential for chronic NF-kappa-B activation.

In terms of biological role, plays a role in the modulation of host signaling pathways by acting as an activator of both the classic and the alternative NF-kappa-B pathways. Thereby, initiates an important range of cellular processes to promote cell survival, proliferation and protection from apoptosis. In Human herpesvirus 8 type P (isolate GK18) (HHV-8), this protein is Viral FLICE protein (ORF71).